The primary structure comprises 243 residues: Phosphoribosylaminoimidazole-succinocarboxamide synthase (243 aa).

This sequence belongs to the SAICAR synthetase family.

The enzyme catalyses 5-amino-1-(5-phospho-D-ribosyl)imidazole-4-carboxylate + L-aspartate + ATP = (2S)-2-[5-amino-1-(5-phospho-beta-D-ribosyl)imidazole-4-carboxamido]succinate + ADP + phosphate + 2 H(+). Its pathway is purine metabolism; IMP biosynthesis via de novo pathway; 5-amino-1-(5-phospho-D-ribosyl)imidazole-4-carboxamide from 5-amino-1-(5-phospho-D-ribosyl)imidazole-4-carboxylate: step 1/2. This Prochlorococcus marinus (strain MIT 9211) protein is Phosphoribosylaminoimidazole-succinocarboxamide synthase.